Consider the following 449-residue polypeptide: Trigger factor (449 aa).

Positions 173 to 258 constitute a PPIase FKBP-type domain; sequence GDRVTVDFVG…LKKVEWPHLP (86 aa).

It belongs to the FKBP-type PPIase family. Tig subfamily.

The protein localises to the cytoplasm. The catalysed reaction is [protein]-peptidylproline (omega=180) = [protein]-peptidylproline (omega=0). Its function is as follows. Involved in protein export. Acts as a chaperone by maintaining the newly synthesized protein in an open conformation. Functions as a peptidyl-prolyl cis-trans isomerase. The protein is Trigger factor of Burkholderia pseudomallei (strain 1710b).